We begin with the raw amino-acid sequence, 722 residues long: Zinc finger BED domain-containing protein RICESLEEPER 2 (722 aa).

The segment at 66–134 (RKKSLVWEHF…QEHKLALTPA (69 aa)) adopts a BED-type zinc-finger fold. The Zn(2+) site is built by Cys89, Cys92, His113, and His127. A disordered region spans residues 572 to 592 (VEQGDGNNAPASENGTQATAP). The span at 576-592 (DGNNAPASENGTQATAP) shows a compositional bias: polar residues. An HATC (Hobo-Ac-Tam3) domain region spans residues 617–702 (ELEQYLDESL…EALVCAKDWL (86 aa)).

As to quaternary structure, homodimer.

It is found in the nucleus. In terms of biological role, transposase-like protein that is essential for plant growth and development. May regulate global gene expression by recruiting other cellular factors. The polypeptide is Zinc finger BED domain-containing protein RICESLEEPER 2 (Oryza sativa subsp. japonica (Rice)).